The sequence spans 139 residues: Small ribosomal subunit protein uS12 (139 aa).

The disordered stretch occupies residues 118 to 139; it reads AGVANRNQSRSRYGTKKPKPKS. The span at 130-139 shows a compositional bias: basic residues; sequence YGTKKPKPKS.

Belongs to the universal ribosomal protein uS12 family. Part of the 30S ribosomal subunit. Contacts proteins S8 and S17. May interact with IF1 in the 30S initiation complex.

With S4 and S5 plays an important role in translational accuracy. In terms of biological role, interacts with and stabilizes bases of the 16S rRNA that are involved in tRNA selection in the A site and with the mRNA backbone. Located at the interface of the 30S and 50S subunits, it traverses the body of the 30S subunit contacting proteins on the other side and probably holding the rRNA structure together. The combined cluster of proteins S8, S12 and S17 appears to hold together the shoulder and platform of the 30S subunit. The chain is Small ribosomal subunit protein uS12 from Mycoplasma mobile (strain ATCC 43663 / 163K / NCTC 11711) (Mesomycoplasma mobile).